The following is a 417-amino-acid chain: Synaptic vesicle membrane protein VAT-1 homolog-like (417 aa).

Disordered regions lie at residues 1–33 and 382–417; these read MAKE…GSHR and PTPL…PFIQ. Phosphoserine is present on Ser390. 2 positions are modified to phosphothreonine: Thr391 and Thr393. Ser394 is subject to Phosphoserine. Residues 395-405 show a composition bias toward acidic residues; that stretch reads EAGEEEEDHEG. Over residues 406–417 the composition is skewed to basic and acidic residues; that stretch reads DSENKERMPFIQ.

It belongs to the zinc-containing alcohol dehydrogenase family. Quinone oxidoreductase subfamily.

In Mus musculus (Mouse), this protein is Synaptic vesicle membrane protein VAT-1 homolog-like (Vat1l).